A 239-amino-acid chain; its full sequence is Glucosamine-6-phosphate deaminase (239 aa).

The Proton acceptor; for enolization step role is filled by D62. The active-site For ring-opening step is the N128. H130 serves as the catalytic Proton acceptor; for ring-opening step. E135 acts as the For ring-opening step in catalysis.

The protein belongs to the glucosamine/galactosamine-6-phosphate isomerase family. NagB subfamily.

It catalyses the reaction alpha-D-glucosamine 6-phosphate + H2O = beta-D-fructose 6-phosphate + NH4(+). The protein operates within amino-sugar metabolism; N-acetylneuraminate degradation; D-fructose 6-phosphate from N-acetylneuraminate: step 5/5. In terms of biological role, catalyzes the reversible isomerization-deamination of glucosamine 6-phosphate (GlcN6P) to form fructose 6-phosphate (Fru6P) and ammonium ion. This is Glucosamine-6-phosphate deaminase from Lactobacillus johnsonii (strain CNCM I-12250 / La1 / NCC 533).